The primary structure comprises 596 residues: Elongation factor 4 (596 aa).

The 182-residue stretch at 2–183 (KNIRNFSIIA…AIVDRIPAPV (182 aa)) folds into the tr-type G domain. Residues 14-19 (DHGKST) and 130-133 (NKID) each bind GTP.

It belongs to the TRAFAC class translation factor GTPase superfamily. Classic translation factor GTPase family. LepA subfamily.

It is found in the cell inner membrane. The enzyme catalyses GTP + H2O = GDP + phosphate + H(+). Functionally, required for accurate and efficient protein synthesis under certain stress conditions. May act as a fidelity factor of the translation reaction, by catalyzing a one-codon backward translocation of tRNAs on improperly translocated ribosomes. Back-translocation proceeds from a post-translocation (POST) complex to a pre-translocation (PRE) complex, thus giving elongation factor G a second chance to translocate the tRNAs correctly. Binds to ribosomes in a GTP-dependent manner. This Sulfurimonas denitrificans (strain ATCC 33889 / DSM 1251) (Thiomicrospira denitrificans (strain ATCC 33889 / DSM 1251)) protein is Elongation factor 4.